Consider the following 214-residue polypeptide: Ras-related protein Rab-11A (214 aa).

GTP-binding positions include 20–28, 39–45, 68–72, 126–129, and 156–158; these read GDSGVGKSN, SLETKST, DTAGQ, NKSD, and SAL. The Effector region motif lies at 42 to 50; sequence TKSTIGVEF. 2 S-geranylgeranyl cysteine lipidation sites follow: Cys-213 and Cys-214.

The protein belongs to the small GTPase superfamily. Rab family.

The protein resides in the contractile vacuole membrane. Its function is as follows. Required for normal contractile vacuole structure and function. Cells expressing a dominant negative rab11A exhibit a more extensive contractile vacuole network and enlarged contractile vacuole bladders. These cells exhibit a functional defect in osmotic regulation where cells immersed in water become rounded and detach from the surface, and contain swollen contractile vacuoles. The polypeptide is Ras-related protein Rab-11A (rab11A) (Dictyostelium discoideum (Social amoeba)).